Reading from the N-terminus, the 331-residue chain is WW domain-containing protein C2F3.14c (331 aa).

The interval 1 to 184 is disordered; that stretch reads MSSSKDCKAT…TNENQAQPSI (184 aa). A compositionally biased stretch (polar residues) spans 9–22; sequence ATSNVDQTIPASNV. Positions 23 to 41 are enriched in low complexity; it reads NSGDFISSNTSSSNSENSN. Polar residues predominate over residues 57–89; sequence SFISENTPKNTFESTQTYENLESISKNEPTSEA. Residues 105 to 145 are compositionally biased toward pro residues; sequence REPPLPNEPVPEEPLPGEPPLPDEPVPEEPLPGEPPLPNEP. Residues 158-184 are compositionally biased toward polar residues; that stretch reads SDETVSETSKNDTSNSPTNENQAQPSI. A WW domain is found at 187–220; the sequence is SEGHRIAAIWDPSQQAYYFWDTLTNTTSWNNPLE. Residues 290–309 form a disordered region; the sequence is YTRKEMEQMKRRTKEKKEMK. The span at 292-309 shows a compositional bias: basic and acidic residues; the sequence is RKEMEQMKRRTKEKKEMK.

The protein resides in the nucleus. This Schizosaccharomyces pombe (strain 972 / ATCC 24843) (Fission yeast) protein is WW domain-containing protein C2F3.14c.